Reading from the N-terminus, the 666-residue chain is Probable potassium transport system protein Kup (666 aa).

The next 12 helical transmembrane spans lie at 16–36, 58–78, 99–119, 141–161, 167–187, 221–241, 253–273, 292–312, 343–363, 373–393, 402–422, and 424–444; these read GFIIALGIVYGDIGTSPLYTM, ISLIIWTLTLITTIKYVLVAL, TPWLIVPAVIGGATLLSDGAL, IFQNQSNVIFATLFILLLLFA, TGVIGKLFGPIMFIWFAFLGI, IFILGSIFLATTGAEALYSDL, WPFVKVAIILSYCGQGAWILA, FTMHVVILATLAAIIASQALI, TYIPVINWFLFAITTSIVLLF, YGLAITITMLMTTILLSFFLI, VLLMMIFFGILEGIFFLASAV, and FMHGGYVVVIIAVAIIFIMTI.

It belongs to the HAK/KUP transporter (TC 2.A.72) family.

The protein localises to the cell membrane. It catalyses the reaction K(+)(in) + H(+)(in) = K(+)(out) + H(+)(out). Transport of potassium into the cell. Likely operates as a K(+):H(+) symporter. The chain is Probable potassium transport system protein Kup from Streptococcus agalactiae serotype V (strain ATCC BAA-611 / 2603 V/R).